Reading from the N-terminus, the 228-residue chain is 7-cyano-7-deazaguanine synthase (228 aa).

11 to 21 (LSGGLDSATCL) contacts ATP. Positions 191, 201, 204, and 207 each coordinate Zn(2+).

This sequence belongs to the QueC family. It depends on Zn(2+) as a cofactor.

The catalysed reaction is 7-carboxy-7-deazaguanine + NH4(+) + ATP = 7-cyano-7-deazaguanine + ADP + phosphate + H2O + H(+). The protein operates within purine metabolism; 7-cyano-7-deazaguanine biosynthesis. Catalyzes the ATP-dependent conversion of 7-carboxy-7-deazaguanine (CDG) to 7-cyano-7-deazaguanine (preQ(0)). The polypeptide is 7-cyano-7-deazaguanine synthase (Azoarcus sp. (strain BH72)).